We begin with the raw amino-acid sequence, 2581 residues long: Highly reducing polyketide synthase sorA (2581 aa).

Positions 14 to 436 constitute a Ketosynthase family 3 (KS3) domain; sequence SEPIAIIGMS…GSNAHIILED (423 aa). Active-site for beta-ketoacyl synthase activity residues include Cys-187, His-322, and His-359. Residues 574–868 form a malonyl-CoA:ACP transacylase (MAT) domain region; that stretch reads VFTGQGAQWN…VVEVGPHTAL (295 aa). Residues 966–1103 form an N-terminal hotdog fold region; the sequence is HDLLGSIVEG…GLVSVELGES (138 aa). The dehydratase (DH) domain stretch occupies residues 966-1270; that stretch reads HDLLGSIVEG…GFSYQSLGRS (305 aa). Residues 966–1273 enclose the PKS/mFAS DH domain; it reads HDLLGSIVEG…YQSLGRSTSL (308 aa). His-998 functions as the Proton acceptor; for dehydratase activity in the catalytic mechanism. Residues 1119–1273 form a C-terminal hotdog fold region; the sequence is TRRILPADLF…YQSLGRSTSL (155 aa). The active-site Proton donor; for dehydratase activity is the Asp-1184. Residues 1461-1568 are methyltransferase (CMet) domain; sequence LEVGAATGAI…SSLLKPGGTL (108 aa). The enoyl reductase (ER)domain stretch occupies residues 1873 to 2184; sequence LKPDLLVFGD…AGDQIGKVVL (312 aa). Residues 2207-2389 form a ketoreductase (KR) domain region; that stretch reads VSYLIVGGSG…AVSIDLSVVN (183 aa). A Carrier domain is found at 2497 to 2574; that stretch reads DAVRVVGTAI…QLAIDVVDRS (78 aa). Residue Ser-2534 is modified to O-(pantetheine 4'-phosphoryl)serine.

Its pathway is secondary metabolite biosynthesis. Its function is as follows. Highly reducing polyketide synthase; part of the gene cluster that mediates the biosynthesis of sorbicillinoids, a diverse group of yellow secondary metabolites that restrict growth of competing pathogenic fungi but not of bacteria. Sorbicillinoids biosynthesis requires the action of two PKSs. SorA iteratively combines three acetyl units and the growing chain is modified by the ketoacyl reductase subunit, and optional by the enoyl reductase subunit in the second cycle. The polyketide is then handed over to the PKS SorB, which adds three more acetyl units, and two methyl groups. SorB releases an aldehyde, which undergoes spontaneous cyclization resulting in the formation of sorbicillin or 2',3'-dihydrosorbicillin. The monooxygenase sorC oxidizes sorbicillin and 2',3'-dihydrosorbicillin to 2',3'-dihydrosorbicillinol and sorbicillinol, respectively. The oxidoreductase sorD further converts sorbicillinol into oxosorbicillinol. Sorbicillinol is the building block for the other sorbicillinoids such as disorbicillinol, bisvertinolon, and dihydrobisvertinolone. In Penicillium rubens (strain ATCC 28089 / DSM 1075 / NRRL 1951 / Wisconsin 54-1255) (Penicillium chrysogenum), this protein is Highly reducing polyketide synthase sorA.